The following is a 158-amino-acid chain: U4/U6.U5 small nuclear ribonucleoprotein 27 kDa protein (158 aa).

The segment covering 1–30 (MGRSRSRTPPRRERRRSRSSSRDRERRRRE) has biased composition (basic residues). The segment at 1–100 (MGRSRSRTPP…ISAEDMQGKT (100 aa)) is disordered. Basic and acidic residues predominate over residues 31–41 (RERSRSRDRDR). The span at 42–62 (RRSRSRSPHRRRSRSPRRHRS) shows a compositional bias: basic residues. Residues 69 to 86 (RQKDRRDDDRKDVKEKPA) show a composition bias toward basic and acidic residues.

Belongs to the SNUT3 family. In terms of assembly, part of a tri-snRNP complex.

The protein localises to the nucleus. In terms of biological role, may play a role in mRNA splicing. In Danio rerio (Zebrafish), this protein is U4/U6.U5 small nuclear ribonucleoprotein 27 kDa protein (snrnp27).